The primary structure comprises 310 residues: Homoserine O-acetyltransferase (310 aa).

The active-site Acyl-thioester intermediate is the cysteine 142. Substrate contacts are provided by lysine 163 and serine 192. Histidine 235 functions as the Proton acceptor in the catalytic mechanism. The active site involves glutamate 237. Arginine 249 contacts substrate.

Belongs to the MetA family.

Its subcellular location is the cytoplasm. It carries out the reaction L-homoserine + acetyl-CoA = O-acetyl-L-homoserine + CoA. It participates in amino-acid biosynthesis; L-methionine biosynthesis via de novo pathway; O-acetyl-L-homoserine from L-homoserine: step 1/1. Functionally, transfers an acetyl group from acetyl-CoA to L-homoserine, forming acetyl-L-homoserine. The polypeptide is Homoserine O-acetyltransferase (Agathobacter rectalis (strain ATCC 33656 / DSM 3377 / JCM 17463 / KCTC 5835 / VPI 0990) (Eubacterium rectale)).